A 623-amino-acid polypeptide reads, in one-letter code: UvrABC system protein C (623 aa).

The GIY-YIG domain maps to 13–92; the sequence is DKPGVYIMKN…IKKYKPRYNI (80 aa). The UVR domain occupies 204–239; that stretch reads NDIIRELKEEMEKASMNLDFEKAADLRDKMLAAQKV.

It belongs to the UvrC family. In terms of assembly, interacts with UvrB in an incision complex.

It localises to the cytoplasm. Its function is as follows. The UvrABC repair system catalyzes the recognition and processing of DNA lesions. UvrC both incises the 5' and 3' sides of the lesion. The N-terminal half is responsible for the 3' incision and the C-terminal half is responsible for the 5' incision. The protein is UvrABC system protein C of Clostridium acetobutylicum (strain ATCC 824 / DSM 792 / JCM 1419 / IAM 19013 / LMG 5710 / NBRC 13948 / NRRL B-527 / VKM B-1787 / 2291 / W).